The following is a 143-amino-acid chain: Papain inhibitor (143 aa).

Positions 1 to 33 (MREFRRVRRVRFAACALVAAATGITLAAGPASA) are cleaved as a signal peptide.

As to quaternary structure, monomer.

The protein localises to the secreted. Stress protein produced under hyperthermal stress conditions. Serves as a glutamine and lysine donor substrate for transglutaminase. Inhibits the cysteine proteases papain and bromelain as well as the bovine serine protease trypsin. Has hardly any or no effect on subtilisin, bovine chymotrypsin, proteinase K from T.album, transglutaminase-activating metalloproteinase (TAMEP) from S.mobaraensis, dispase from B.polymyxa, thermolysin from B.thermoproteolyticus or collagenase from C.histolyticum. The sequence is that of Papain inhibitor (pi) from Streptomyces mobaraensis (Streptoverticillium mobaraense).